The sequence spans 317 residues: Acetyl-coenzyme A carboxylase carboxyl transferase subunit alpha (317 aa).

Residues 40 to 293 (LEKRSADALK…GDIIAASLRS (254 aa)) enclose the CoA carboxyltransferase C-terminal domain.

This sequence belongs to the AccA family. Acetyl-CoA carboxylase is a heterohexamer composed of biotin carboxyl carrier protein (AccB), biotin carboxylase (AccC) and two subunits each of ACCase subunit alpha (AccA) and ACCase subunit beta (AccD).

Its subcellular location is the cytoplasm. The enzyme catalyses N(6)-carboxybiotinyl-L-lysyl-[protein] + acetyl-CoA = N(6)-biotinyl-L-lysyl-[protein] + malonyl-CoA. It functions in the pathway lipid metabolism; malonyl-CoA biosynthesis; malonyl-CoA from acetyl-CoA: step 1/1. Component of the acetyl coenzyme A carboxylase (ACC) complex. First, biotin carboxylase catalyzes the carboxylation of biotin on its carrier protein (BCCP) and then the CO(2) group is transferred by the carboxyltransferase to acetyl-CoA to form malonyl-CoA. This is Acetyl-coenzyme A carboxylase carboxyl transferase subunit alpha from Brucella canis (strain ATCC 23365 / NCTC 10854 / RM-666).